Consider the following 93-residue polypeptide: Pyrimidine/purine nucleoside phosphorylase (93 aa).

The protein belongs to the nucleoside phosphorylase PpnP family.

The enzyme catalyses a purine D-ribonucleoside + phosphate = a purine nucleobase + alpha-D-ribose 1-phosphate. The catalysed reaction is adenosine + phosphate = alpha-D-ribose 1-phosphate + adenine. It catalyses the reaction cytidine + phosphate = cytosine + alpha-D-ribose 1-phosphate. It carries out the reaction guanosine + phosphate = alpha-D-ribose 1-phosphate + guanine. The enzyme catalyses inosine + phosphate = alpha-D-ribose 1-phosphate + hypoxanthine. The catalysed reaction is thymidine + phosphate = 2-deoxy-alpha-D-ribose 1-phosphate + thymine. It catalyses the reaction uridine + phosphate = alpha-D-ribose 1-phosphate + uracil. It carries out the reaction xanthosine + phosphate = alpha-D-ribose 1-phosphate + xanthine. In terms of biological role, catalyzes the phosphorolysis of diverse nucleosides, yielding D-ribose 1-phosphate and the respective free bases. Can use uridine, adenosine, guanosine, cytidine, thymidine, inosine and xanthosine as substrates. Also catalyzes the reverse reactions. This is Pyrimidine/purine nucleoside phosphorylase from Aliivibrio fischeri (strain ATCC 700601 / ES114) (Vibrio fischeri).